The following is a 40-amino-acid chain: Photosystem II reaction center protein J (40 aa).

Residues 8–28 (IPLWIVGTVTGILVIGLIGVF) form a helical membrane-spanning segment.

This sequence belongs to the PsbJ family. As to quaternary structure, PSII is composed of 1 copy each of membrane proteins PsbA, PsbB, PsbC, PsbD, PsbE, PsbF, PsbH, PsbI, PsbJ, PsbK, PsbL, PsbM, PsbT, PsbX, PsbY, PsbZ, Psb30/Ycf12, at least 3 peripheral proteins of the oxygen-evolving complex and a large number of cofactors. It forms dimeric complexes.

Its subcellular location is the plastid. The protein localises to the chloroplast thylakoid membrane. Functionally, one of the components of the core complex of photosystem II (PSII). PSII is a light-driven water:plastoquinone oxidoreductase that uses light energy to abstract electrons from H(2)O, generating O(2) and a proton gradient subsequently used for ATP formation. It consists of a core antenna complex that captures photons, and an electron transfer chain that converts photonic excitation into a charge separation. The sequence is that of Photosystem II reaction center protein J from Coffea arabica (Arabian coffee).